Here is a 352-residue protein sequence, read N- to C-terminus: E3 ubiquitin-protein ligase RNF146 (352 aa).

An RING-type zinc finger spans residues 36 to 74 (CAICLQTCVHPVSLPCKHVFCYLCVKGASWLGKRCALCR). Residues Lys-84 and Lys-94 each participate in a glycyl lysine isopeptide (Lys-Gly) (interchain with G-Cter in ubiquitin) cross-link. Positions 91–167 (EELKAASRGN…EHGRRRKIKR (77 aa)) constitute a WWE domain. The a glycoprotein site is built by Tyr-107, Arg-110, and Trp-114. A Glycyl lysine isopeptide (Lys-Gly) (interchain with G-Cter in ubiquitin) cross-link involves residue Lys-130. Residues Tyr-144, Gln-153, Arg-163, and Lys-175 each contribute to the a glycoprotein site. Lys-175 is covalently cross-linked (Glycyl lysine isopeptide (Lys-Gly) (interchain with G-Cter in ubiquitin)). Disordered stretches follow at residues 195–242 (SSAD…AGAS), 259–293 (ERSH…ASSD), and 317–352 (NQTV…VTEV). Residues 197–210 (ADGADSGSAHTGAS) show a composition bias toward low complexity. A compositionally biased stretch (polar residues) spans 215–233 (VPSSTRPLTSVDGQLTSPV). Acidic residues predominate over residues 282 to 293 (STEETESDASSD). 2 positions are modified to phosphoserine: Ser-288 and Ser-292.

In terms of assembly, can form homooligomers. Interacts with PARsylated AXIN1, AXIN2, BLZF1, CASC3, H1-2, IPO7, LIG3, NCL, PARP1, XRCC1, XRCC5 and XRCC6. Interacts with DDB1, DHX15, IQGAP1, LRPPRC, PARP2, PRKDC, RUVBL2, TNKS1 and TNKS2. Binding often leads to interactor ubiquitination, in the presence of the appropriate E1 and E2 enzymes, and proteasomal degradation. Ubiquitinated; autoubiquitinated. Autoubiquitination is enhanced upon poly(ADP-ribose)-binding.

The protein resides in the cytoplasm. The protein localises to the cytosol. It is found in the nucleus. The enzyme catalyses S-ubiquitinyl-[E2 ubiquitin-conjugating enzyme]-L-cysteine + [acceptor protein]-L-lysine = [E2 ubiquitin-conjugating enzyme]-L-cysteine + N(6)-ubiquitinyl-[acceptor protein]-L-lysine.. It functions in the pathway protein modification; protein ubiquitination. In terms of biological role, E3 ubiquitin-protein ligase that specifically binds poly-ADP-ribosylated (PARsylated) proteins and mediates their ubiquitination and subsequent degradation. May regulate many important biological processes, such as cell survival and DNA damage response. Acts as an activator of the Wnt signaling pathway by mediating the ubiquitination of PARsylated AXIN1 and AXIN2, 2 key components of the beta-catenin destruction complex. Acts in cooperation with tankyrase proteins (TNKS and TNKS2), which mediate PARsylation of target proteins AXIN1, AXIN2, BLZF1, CASC3, TNKS and TNKS2. Recognizes and binds tankyrase-dependent PARsylated proteins via its WWE domain and mediates their ubiquitination, leading to their degradation. Different ubiquitin linkage types have been observed: TNKS2 undergoes ubiquitination at 'Lys-48' and 'Lys-63', while AXIN1 is only ubiquitinated at 'Lys-48'. May regulate TNKS and TNKS2 subcellular location, preventing aggregation at a centrosomal location. Neuroprotective protein. Protects the brain against N-methyl-D-aspartate (NMDA) receptor-mediated glutamate excitotoxicity and ischemia, by interfering with PAR-induced cell death, called parthanatos. Prevents nuclear translocation of AIFM1 in a PAR-binding dependent manner. Does not affect PARP1 activation. Protects against cell death induced by DNA damaging agents, such as N-methyl-N-nitro-N-nitrosoguanidine (MNNG) and rescues cells from G1 arrest. Promotes cell survival after gamma-irradiation. Facilitates DNA repair. The polypeptide is E3 ubiquitin-protein ligase RNF146 (Rnf146) (Rattus norvegicus (Rat)).